We begin with the raw amino-acid sequence, 156 residues long: Mitochondrial intermembrane space cysteine motif-containing protein MIX17 (156 aa).

The transit peptide at Met-1 to Ser-21 directs the protein to the mitochondrion. A compositionally biased stretch (low complexity) spans Met-1–Ser-21. Disordered regions lie at residues Met-1–Thr-50 and Ala-78–Thr-110. Residues Phe-84–Thr-110 show a composition bias toward polar residues. The region spanning Gly-115–Tyr-156 is the CHCH domain. The Cx9C motif motif lies at Cys-118 to Cys-128. Intrachain disulfides connect Cys-118/Cys-149 and Cys-128/Cys-139.

It is found in the mitochondrion intermembrane space. This chain is Mitochondrial intermembrane space cysteine motif-containing protein MIX17 (MIX17), found in Saccharomyces cerevisiae (strain ATCC 204508 / S288c) (Baker's yeast).